A 763-amino-acid chain; its full sequence is Phosphoglycerol transferase I (763 aa).

The next 4 helical transmembrane spans lie at 1-21, 26-46, 77-97, and 108-128; these read MSEL…AWKA, WWFA…ITLY, ILPG…LGWV, and VGYS…SPAF.

The protein belongs to the OpgB family.

The protein localises to the cell inner membrane. The enzyme catalyses a phosphatidylglycerol + a membrane-derived-oligosaccharide D-glucose = a 1,2-diacyl-sn-glycerol + a membrane-derived-oligosaccharide 6-(glycerophospho)-D-glucose.. The protein operates within glycan metabolism; osmoregulated periplasmic glucan (OPG) biosynthesis. In terms of biological role, transfers a phosphoglycerol residue from phosphatidylglycerol to the membrane-bound nascent glucan backbones. The chain is Phosphoglycerol transferase I from Salmonella dublin (strain CT_02021853).